The following is a 397-amino-acid chain: Elongation factor Tu (397 aa).

The tr-type G domain maps to 10–207; sequence LPHVNVGTIG…TLDAYIPEPV (198 aa). The segment at 19–26 is G1; the sequence is GHVDHGKT. 19–26 contacts GTP; sequence GHVDHGKT. Thr26 serves as a coordination point for Mg(2+). Positions 60–64 are G2; the sequence is GITIN. Residues 81–84 are G3; the sequence is DCPG. GTP contacts are provided by residues 81 to 85 and 136 to 139; these read DCPGH and NKAD. A G4 region spans residues 136-139; that stretch reads NKAD. Residues 174-176 are G5; that stretch reads SAR.

It belongs to the TRAFAC class translation factor GTPase superfamily. Classic translation factor GTPase family. EF-Tu/EF-1A subfamily. Monomer.

The protein localises to the cytoplasm. It carries out the reaction GTP + H2O = GDP + phosphate + H(+). Its function is as follows. GTP hydrolase that promotes the GTP-dependent binding of aminoacyl-tRNA to the A-site of ribosomes during protein biosynthesis. The chain is Elongation factor Tu from Pseudomonas entomophila (strain L48).